Reading from the N-terminus, the 254-residue chain is L-rhamnose 1-dehydrogenase (NADP(+)) (254 aa).

NADP(+)-binding residues include Gly-13, Ser-15, Arg-16, Ile-18, Asp-64, and Asn-91. Ser-144 (proton donor) is an active-site residue. The beta-L-rhamnose site is built by Ser-144, Ser-146, Gln-154, and Tyr-157. NADP(+) is bound by residues Tyr-157 and Lys-161. The active-site Proton acceptor is Tyr-157. The Lowers pKa of active site Tyr role is filled by Lys-161. Thr-189 serves as a coordination point for beta-L-rhamnose. Ile-190 is an NADP(+) binding site. Asn-195 serves as a coordination point for beta-L-rhamnose.

The protein belongs to the short-chain dehydrogenases/reductases (SDR) family.

The enzyme catalyses L-rhamnofuranose + NADP(+) = L-rhamnono-1,4-lactone + NADPH + H(+). Its pathway is carbohydrate degradation; L-rhamnose degradation. Involved in the non-phosphorylated metabolic pathway of L-rhamnose catabolism. Catalyzes the oxidation of L-rhamnose to yield L-rhamnono-1,4-lactone. It can also oxidize L-lyxose and L-mannose, and uses only NADP. The chain is L-rhamnose 1-dehydrogenase (NADP(+)) from Thermoplasma acidophilum (strain ATCC 25905 / DSM 1728 / JCM 9062 / NBRC 15155 / AMRC-C165).